A 27-amino-acid polypeptide reads, in one-letter code: M-ectatotoxin-Eb2a (27 aa).

In terms of tissue distribution, expressed by the venom gland.

It is found in the secreted. In terms of biological role, antimicrobial peptide forming an alpha-helix in watery and membraneous environments, enabling it to perforate membranes. Active against Gram-negative bacteria E.coli DH5alpha (MIC=5 uM), E.coli MH1 (MIC=0.6 uM) and P.aeruginosa PAO1 (MIC=10 uM) and against Gram-positive bacteria B.subtilis VKM B-501 (MIC=0.6 uM) and A.globiformis VKM Ac-1112 (MIC=0.2 uM). Has cytolytic and hemolytic activity. This Ectatomma brunneum (Ant) protein is M-ectatotoxin-Eb2a.